The sequence spans 1159 residues: ABC transporter G family member 24 (1159 aa).

The next 2 membrane-spanning stretches (helical) occupy residues 11 to 31 (FNSILKSILLLLLLFINGNNC) and 415 to 435 (VGSGVGFIGLTLLIGAIFLIF). An ABC transporter domain is found at 454 to 707 (LSFHNISCYV…FIKQKIAGMT (254 aa)). Position 497-504 (497-504 (GLSGSGKT)) interacts with ATP. A disordered region spans residues 752–846 (QSTSPALSSN…DNNNKNNDDD (95 aa)). Low complexity-rich tracts occupy residues 759-768 (SSNSNNSDIN) and 775-784 (INNPHNQNIH). A compositionally biased stretch (basic residues) spans 785–795 (HQQHHHHHRHI). A compositionally biased stretch (low complexity) spans 822–841 (DNINNNNNNNKVKNNDNNNK). The ABC transmembrane type-2 domain maps to 902 to 1154 (FLLRTTYFVH…LLAYVFLRFL (253 aa)). The next 6 membrane-spanning stretches (helical) occupy residues 909–929 (FVHIFVGLTLGYLFWKLPANL), 937–957 (FGAMFFMTALLSFGSITSLDL), 1005–1025 (YMIGLRPGILHFIYFLISLVL), 1047–1067 (ANMVSILLLFVFLLFDGFLLA), 1074–1094 (YLIGLVWISFMSYGLEIPVVN), and 1135–1155 (VLLGMIVGYLLLAYVFLRFLV).

This sequence belongs to the ABC transporter superfamily. ABCG family. Eye pigment precursor importer (TC 3.A.1.204) subfamily.

The protein resides in the membrane. This Dictyostelium discoideum (Social amoeba) protein is ABC transporter G family member 24 (abcG24).